Consider the following 309-residue polypeptide: 2-dehydropantoate 2-reductase (309 aa).

Residues Gly7–Gly12, Arg31, and Lys74 each bind NADP(+). CoA is bound by residues Ala8–Ser10, Arg31, Lys74, and Cys84. NADP(+) contacts are provided by Asn100 and Ala124. Lys180 functions as the Proton donor in the catalytic mechanism. Substrate-binding positions include Lys180, Asn184, Asn188, Asn198, and Asn247 to Ser250. A CoA-binding site is contributed by Arg257. Glu262 is a binding site for NADP(+).

The protein belongs to the ketopantoate reductase family. In terms of assembly, homodimer.

It localises to the cytoplasm. The catalysed reaction is (R)-pantoate + NAD(+) = 2-dehydropantoate + NADH + H(+). It carries out the reaction (R)-pantoate + NADP(+) = 2-dehydropantoate + NADPH + H(+). The protein operates within cofactor biosynthesis; coenzyme A biosynthesis. With respect to regulation, regulated by feedback inhibition by coenzyme A (CoA). CoA acts by competing with NAD(P)H. A disulfide bond is formed between CoA and Cys-84, which indicates an irreversible inhibition upon binding of CoA. Catalyzes the NAD(P)H-dependent reduction of ketopantoate into pantoic acid. Prefers NADH rather than NADPH as the electron donor. The sequence is that of 2-dehydropantoate 2-reductase from Thermococcus kodakarensis (strain ATCC BAA-918 / JCM 12380 / KOD1) (Pyrococcus kodakaraensis (strain KOD1)).